The chain runs to 286 residues: 2-oxoglutarate synthase subunit KorB (286 aa).

Heterotetramer of the KorA, KorB, KorC and KorD subunits.

It carries out the reaction 2 oxidized [2Fe-2S]-[ferredoxin] + 2-oxoglutarate + CoA = succinyl-CoA + 2 reduced [2Fe-2S]-[ferredoxin] + CO2 + H(+). The polypeptide is 2-oxoglutarate synthase subunit KorB (korB) (Methanothermobacter thermautotrophicus (strain ATCC 29096 / DSM 1053 / JCM 10044 / NBRC 100330 / Delta H) (Methanobacterium thermoautotrophicum)).